The following is a 77-amino-acid chain: UPF0401 protein ECP_3853 (77 aa).

Belongs to the UPF0401 family.

This Escherichia coli O6:K15:H31 (strain 536 / UPEC) protein is UPF0401 protein ECP_3853.